Consider the following 158-residue polypeptide: Ribosome-binding factor A (158 aa).

A disordered region spans residues 127-158 (RQGAVHAGDADPYKESAAEEPAAYEDDERRPD). Residues 134 to 143 (GDADPYKESA) show a composition bias toward basic and acidic residues.

The protein belongs to the RbfA family. In terms of assembly, monomer. Binds 30S ribosomal subunits, but not 50S ribosomal subunits or 70S ribosomes.

The protein resides in the cytoplasm. Functionally, one of several proteins that assist in the late maturation steps of the functional core of the 30S ribosomal subunit. Associates with free 30S ribosomal subunits (but not with 30S subunits that are part of 70S ribosomes or polysomes). Required for efficient processing of 16S rRNA. May interact with the 5'-terminal helix region of 16S rRNA. The polypeptide is Ribosome-binding factor A (Mycobacteroides abscessus (strain ATCC 19977 / DSM 44196 / CCUG 20993 / CIP 104536 / JCM 13569 / NCTC 13031 / TMC 1543 / L948) (Mycobacterium abscessus)).